Reading from the N-terminus, the 196-residue chain is Rac-like GTP-binding protein RAC9 (196 aa).

13 to 20 (GDGAVGKT) contributes to the GTP binding site. The Effector region signature appears at 35–43 (YVPTVFDNF). GTP contacts are provided by residues 60–64 (DTAGQ) and 118–121 (TKLD). Residue C193 is modified to Cysteine methyl ester. C193 carries S-geranylgeranyl cysteine lipidation. Residues 194-196 (AFL) constitute a propeptide, removed in mature form.

The protein belongs to the small GTPase superfamily. Rho family.

Its subcellular location is the cytoplasm. The protein localises to the membrane. Its function is as follows. Inactive GDP-bound Rho GTPases reside in the cytosol, are found in a complex with Rho GDP-dissociation inhibitors (Rho GDIs), and are released from the GDI protein in order to translocate to membranes upon activation. This is Rac-like GTP-binding protein RAC9 (RAC9) from Gossypium hirsutum (Upland cotton).